The chain runs to 367 residues: tRNA-specific 2-thiouridylase MnmA (367 aa).

Residues 10-17 (AMSGGVDS) and methionine 36 contribute to the ATP site. Residue cysteine 106 is the Nucleophile of the active site. Cysteine 106 and cysteine 204 form a disulfide bridge. Glycine 130 is an ATP binding site. Residues 154–156 (KDQ) form an interaction with tRNA region. The active-site Cysteine persulfide intermediate is cysteine 204. Residues 310–311 (RY) are interaction with tRNA.

The protein belongs to the MnmA/TRMU family.

It is found in the cytoplasm. It catalyses the reaction S-sulfanyl-L-cysteinyl-[protein] + uridine(34) in tRNA + AH2 + ATP = 2-thiouridine(34) in tRNA + L-cysteinyl-[protein] + A + AMP + diphosphate + H(+). Its function is as follows. Catalyzes the 2-thiolation of uridine at the wobble position (U34) of tRNA, leading to the formation of s(2)U34. This is tRNA-specific 2-thiouridylase MnmA from Desulforamulus reducens (strain ATCC BAA-1160 / DSM 100696 / MI-1) (Desulfotomaculum reducens).